The primary structure comprises 570 residues: Endo-1,4-beta-xylanase 4 (570 aa).

Positions 1–24 (MKRFNYGFFHLVLFLISLLLLGSG) are cleaved as a signal peptide. N92, N190, and N300 each carry an N-linked (GlcNAc...) asparagine glycan. The region spanning 195-494 (EGSVISIEQI…TQAGDLIDKL (300 aa)) is the GH10 domain. E325 acts as the Proton donor in catalysis. N339 carries an N-linked (GlcNAc...) asparagine glycan. Catalysis depends on E432, which acts as the Nucleophile. Residue N545 is glycosylated (N-linked (GlcNAc...) asparagine).

Belongs to the glycosyl hydrolase 10 (cellulase F) family.

It carries out the reaction Endohydrolysis of (1-&gt;4)-beta-D-xylosidic linkages in xylans.. The protein operates within glycan degradation; xylan degradation. Functionally, binds to and hydrolyzes insoluble and soluble xylan substrates. This chain is Endo-1,4-beta-xylanase 4, found in Arabidopsis thaliana (Mouse-ear cress).